Consider the following 189-residue polypeptide: Probable transcriptional regulator Rv1176c (189 aa).

The protein belongs to the PadR family. As to quaternary structure, homodimer.

Its subcellular location is the cytoplasm. Functionally, probable transcriptional regulator that may help mitigate the effect of oxidative stress and help mycobacteria survive inside macrophages. Binds to its own promoter region. The protein is Probable transcriptional regulator Rv1176c of Mycobacterium tuberculosis (strain ATCC 25618 / H37Rv).